A 394-amino-acid chain; its full sequence is 1-deoxy-D-xylulose 5-phosphate reductoisomerase (394 aa).

NADPH is bound by residues threonine 10, glycine 11, serine 12, isoleucine 13, glycine 38, arginine 39, asparagine 40, and asparagine 123. Lysine 124 contributes to the 1-deoxy-D-xylulose 5-phosphate binding site. Position 125 (glutamate 125) interacts with NADPH. Aspartate 149 contributes to the Mn(2+) binding site. Positions 150, 151, 175, and 198 each coordinate 1-deoxy-D-xylulose 5-phosphate. A Mn(2+)-binding site is contributed by glutamate 151. Glycine 204 contacts NADPH. 1-deoxy-D-xylulose 5-phosphate-binding residues include serine 211, asparagine 216, lysine 217, and glutamate 220. Glutamate 220 contacts Mn(2+).

It belongs to the DXR family. Mg(2+) is required as a cofactor. The cofactor is Mn(2+).

It catalyses the reaction 2-C-methyl-D-erythritol 4-phosphate + NADP(+) = 1-deoxy-D-xylulose 5-phosphate + NADPH + H(+). Its pathway is isoprenoid biosynthesis; isopentenyl diphosphate biosynthesis via DXP pathway; isopentenyl diphosphate from 1-deoxy-D-xylulose 5-phosphate: step 1/6. Functionally, catalyzes the NADPH-dependent rearrangement and reduction of 1-deoxy-D-xylulose-5-phosphate (DXP) to 2-C-methyl-D-erythritol 4-phosphate (MEP). This chain is 1-deoxy-D-xylulose 5-phosphate reductoisomerase, found in Cereibacter sphaeroides (strain ATCC 17029 / ATH 2.4.9) (Rhodobacter sphaeroides).